Reading from the N-terminus, the 283-residue chain is Acetylglutamate kinase (283 aa).

Substrate is bound by residues 63–64 (GG), arginine 85, and asparagine 178.

It belongs to the acetylglutamate kinase family. ArgB subfamily.

It localises to the cytoplasm. The enzyme catalyses N-acetyl-L-glutamate + ATP = N-acetyl-L-glutamyl 5-phosphate + ADP. The protein operates within amino-acid biosynthesis; L-arginine biosynthesis; N(2)-acetyl-L-ornithine from L-glutamate: step 2/4. Functionally, catalyzes the ATP-dependent phosphorylation of N-acetyl-L-glutamate. This Prochlorococcus marinus (strain MIT 9515) protein is Acetylglutamate kinase.